The primary structure comprises 637 residues: Acetolactate synthase 2, chloroplastic (637 aa).

The transit peptide at 1–73 (MASFSFFGTI…SSKYAPNVPR (73 aa)) directs the protein to the chloroplast. Residues 35 to 69 (RRATRVSVSANSKKDQDRTASRRENPSTFSSKYAP) form a disordered region. Positions 46–59 (SKKDQDRTASRREN) are enriched in basic and acidic residues. Glu-120 is a binding site for thiamine diphosphate. Residues Arg-222, 329 to 350 (HGTV…FGVR), and 372 to 391 (DIDS…VCCD) contribute to the FAD site. The thiamine pyrophosphate binding stretch occupies residues 462–542 (QHQMWAAQFY…VKVLLINNQH (81 aa)). Asp-513 and Asn-540 together coordinate Mg(2+).

The protein belongs to the TPP enzyme family. Requires Mg(2+) as cofactor. It depends on thiamine diphosphate as a cofactor.

Its subcellular location is the plastid. It is found in the chloroplast. It carries out the reaction 2 pyruvate + H(+) = (2S)-2-acetolactate + CO2. It functions in the pathway amino-acid biosynthesis; L-isoleucine biosynthesis; L-isoleucine from 2-oxobutanoate: step 1/4. Its pathway is amino-acid biosynthesis; L-valine biosynthesis; L-valine from pyruvate: step 1/4. The chain is Acetolactate synthase 2, chloroplastic from Brassica napus (Rape).